A 328-amino-acid chain; its full sequence is P2Y purinoceptor 6 (328 aa).

The Extracellular portion of the chain corresponds to 1–27 (MEQDNGTIQAPGLPPTTCVYREDFKRL). The N-linked (GlcNAc...) asparagine glycan is linked to asparagine 5. The helical transmembrane segment at 28 to 48 (LLTPVYSVVLVVGLPLNICVI) threads the bilayer. The Cytoplasmic segment spans residues 49–62 (AQICASRRTLTRSA). Residues 63 to 83 (VYTLNLALADLMYACSLPLLI) form a helical membrane-spanning segment. The Extracellular segment spans residues 84 to 101 (YNYARGDHWPFGDLACRF). Cysteine 99 and cysteine 177 are disulfide-bonded. Residues 102–122 (VRFLFYANLHGSILFLTCISF) traverse the membrane as a helical segment. The Cytoplasmic segment spans residues 123–144 (QRYLGICHPLASWHKRGGRRAA). Residues 145–165 (WVVCGVVWLAVTAQCLPTAVF) traverse the membrane as a helical segment. The Extracellular portion of the chain corresponds to 166 to 194 (AATGIQRNRTVCYDLSPPILSTRYLPYGM). Asparagine 173 carries an N-linked (GlcNAc...) asparagine glycan. Residues 195 to 215 (ALTVIGFLLPFIALLACYCRM) traverse the membrane as a helical segment. Residues 216–236 (ARRLCRQDGPAGPVAQERRSK) lie on the Cytoplasmic side of the membrane. Residues 237–257 (AARMAVVVAAVFAISFLPFHI) traverse the membrane as a helical segment. Residues 258–280 (TKTAYLAVRSTPGVSCPVLETFA) are Extracellular-facing. A helical transmembrane segment spans residues 281–303 (AAYKGTRPFASVNSVLDPILFYF). Topologically, residues 304-328 (TQQKFRRQPHDLLQRLTAKWQRQRV) are cytoplasmic.

Belongs to the G-protein coupled receptor 1 family.

The protein localises to the cell membrane. Receptor for extracellular UTP &gt; ADP = 2-methylthio-ATP &gt; ADP-beta-S &gt; ATP = ATP-gamma-S. The activity of this receptor is mediated by G proteins which activate a phosphatidylinositol-calcium second messenger system. Functionally coupled to phospholipase C. The chain is P2Y purinoceptor 6 (P2ry6) from Mus musculus (Mouse).